Reading from the N-terminus, the 346-residue chain is Hydroxycarboxylic acid receptor 1 (346 aa).

Over 1–21 (MYNGSCCRIEGDTISQVMPPL) the chain is Extracellular. Residue N3 is glycosylated (N-linked (GlcNAc...) asparagine). Residues 22 to 42 (LIVAFVLGALGNGVALCGFCF) form a helical membrane-spanning segment. The Cytoplasmic segment spans residues 43–49 (HMKTWKP). The helical transmembrane segment at 50–70 (STVYLFNLAVADFLLMICLPF) threads the bilayer. The Extracellular portion of the chain corresponds to 71-89 (RTDYYLRRRHWAFGDIPCR). C88 and C165 are oxidised to a cystine. Residues 90–110 (VGLFTLAMNRAGSIVFLTVVA) traverse the membrane as a helical segment. Over 111-130 (ADRYFKVVHPHHAVNTISTR) the chain is Cytoplasmic. Residues 131 to 151 (VAAGIVCTLWALVILGTVYLL) traverse the membrane as a helical segment. The Extracellular segment spans residues 152–182 (LENHLCVQETAVSCESFIMESANGWHDIMFQ). Residues 183–203 (LEFFMPLGIILFCSFKIVWSL) form a helical membrane-spanning segment. Over 204–220 (RRRQQLARQARMKKATR) the chain is Cytoplasmic. A helical transmembrane segment spans residues 221 to 241 (FIMVVAIVFITCYLPSVSARL). Residues 242 to 261 (YFLWTVPSSACDPSVHGALH) lie on the Extracellular side of the membrane. Residues 262–281 (ITLSFTYMNSMLDPLVYYFS) form a helical membrane-spanning segment. Residues 282–346 (SPSFPKFYNK…QWDPHIVEWH (65 aa)) are Cytoplasmic-facing.

Belongs to the G-protein coupled receptor 1 family. As to expression, expressed abundantly in brown and white fat. It also detectable at lower levels in liver, kidney, skeletal muscle, brain and pituitary. Not detected in frontal, temporal and occipital lobes of the cortex, basal forebrain, caudate nucleus, nucleus accumbens and hippocampus.

Its subcellular location is the cell membrane. Its function is as follows. Acts as a receptor for L-lactate and mediates its anti-lipolytic effect through a G(i)-protein-mediated pathway. The sequence is that of Hydroxycarboxylic acid receptor 1 (HCAR1) from Homo sapiens (Human).